The following is an 81-amino-acid chain: Photosystem I iron-sulfur center (81 aa).

2 4Fe-4S ferredoxin-type domains span residues 2 to 31 and 37 to 68; these read SHSV…MVPW and GQIA…VRVY. Residues C11, C14, C17, C21, C48, C51, C54, and C58 each coordinate [4Fe-4S] cluster.

In terms of assembly, the cyanobacterial PSI reaction center is composed of one copy each of PsaA,B,C,D,E,F,I,J,K,L,M and X, and forms trimeric complexes. Requires [4Fe-4S] cluster as cofactor.

It localises to the cellular thylakoid membrane. It catalyses the reaction reduced [plastocyanin] + hnu + oxidized [2Fe-2S]-[ferredoxin] = oxidized [plastocyanin] + reduced [2Fe-2S]-[ferredoxin]. Apoprotein for the two 4Fe-4S centers FA and FB of photosystem I (PSI); essential for photochemical activity. FB is the terminal electron acceptor of PSI, donating electrons to ferredoxin. The C-terminus interacts with PsaA/B/D and helps assemble the protein into the PSI complex. Required for binding of PsaD and PsaE to PSI. PSI is a plastocyanin/cytochrome c6-ferredoxin oxidoreductase, converting photonic excitation into a charge separation, which transfers an electron from the donor P700 chlorophyll pair to the spectroscopically characterized acceptors A0, A1, FX, FA and FB in turn. In Prochlorococcus marinus (strain SARG / CCMP1375 / SS120), this protein is Photosystem I iron-sulfur center.